We begin with the raw amino-acid sequence, 79 residues long: D-alanyl carrier protein (79 aa).

A Carrier domain is found at 1-76; the sequence is MKEQIFDIIE…KIAARVQEKT (76 aa). O-(pantetheine 4'-phosphoryl)serine is present on serine 34.

This sequence belongs to the DltC family. Post-translationally, 4'-phosphopantetheine is transferred from CoA to a specific serine of apo-DCP.

The protein resides in the cytoplasm. Its pathway is cell wall biogenesis; lipoteichoic acid biosynthesis. Its function is as follows. Carrier protein involved in the D-alanylation of lipoteichoic acid (LTA). The loading of thioester-linked D-alanine onto DltC is catalyzed by D-alanine--D-alanyl carrier protein ligase DltA. The DltC-carried D-alanyl group is further transferred to cell membrane phosphatidylglycerol (PG) by forming an ester bond, probably catalyzed by DltD. D-alanylation of LTA plays an important role in modulating the properties of the cell wall in Gram-positive bacteria, influencing the net charge of the cell wall. The chain is D-alanyl carrier protein from Lactococcus lactis subsp. cremoris (strain SK11).